A 429-amino-acid polypeptide reads, in one-letter code: Nicotinate phosphoribosyltransferase (429 aa).

Nicotinate contacts are provided by Y15, F177, and T229. H232 is modified (phosphohistidine; by autocatalysis). R294 contacts nicotinate. T355 lines the 5-phospho-alpha-D-ribose 1-diphosphate pocket.

This sequence belongs to the NAPRTase family. Transiently phosphorylated on a His residue during the reaction cycle. Phosphorylation strongly increases the affinity for substrates and increases the rate of nicotinate D-ribonucleotide production. Dephosphorylation regenerates the low-affinity form of the enzyme, leading to product release.

The protein resides in the cytoplasm. The protein localises to the nucleus. The enzyme catalyses nicotinate + 5-phospho-alpha-D-ribose 1-diphosphate + ATP + H2O = nicotinate beta-D-ribonucleotide + ADP + phosphate + diphosphate. Its pathway is cofactor biosynthesis; NAD(+) biosynthesis; nicotinate D-ribonucleotide from nicotinate: step 1/1. In terms of biological role, catalyzes the first step in the biosynthesis of NAD from nicotinic acid, the ATP-dependent synthesis of beta-nicotinate D-ribonucleotide from nicotinate and 5-phospho-D-ribose 1-phosphate. Essential for growth under anaerobic conditions. In Saccharomyces cerevisiae (strain ATCC 204508 / S288c) (Baker's yeast), this protein is Nicotinate phosphoribosyltransferase (NPT1).